Reading from the N-terminus, the 427-residue chain is Serine--tRNA ligase (427 aa).

231 to 233 (TAE) is an L-serine binding site. An ATP-binding site is contributed by 262–264 (RSE). Residue glutamate 285 coordinates L-serine. 349–352 (EISS) contacts ATP. Serine 385 is an L-serine binding site.

It belongs to the class-II aminoacyl-tRNA synthetase family. Type-1 seryl-tRNA synthetase subfamily. As to quaternary structure, homodimer. The tRNA molecule binds across the dimer.

Its subcellular location is the cytoplasm. The enzyme catalyses tRNA(Ser) + L-serine + ATP = L-seryl-tRNA(Ser) + AMP + diphosphate + H(+). It carries out the reaction tRNA(Sec) + L-serine + ATP = L-seryl-tRNA(Sec) + AMP + diphosphate + H(+). It functions in the pathway aminoacyl-tRNA biosynthesis; selenocysteinyl-tRNA(Sec) biosynthesis; L-seryl-tRNA(Sec) from L-serine and tRNA(Sec): step 1/1. Catalyzes the attachment of serine to tRNA(Ser). Is also able to aminoacylate tRNA(Sec) with serine, to form the misacylated tRNA L-seryl-tRNA(Sec), which will be further converted into selenocysteinyl-tRNA(Sec). This chain is Serine--tRNA ligase, found in Brucella melitensis biotype 2 (strain ATCC 23457).